A 95-amino-acid chain; its full sequence is High mobility group nucleosome-binding domain-containing protein 3 (95 aa).

3 stretches are compositionally biased toward basic and acidic residues: residues 1-25 (MPKR…EPTR), 39-53 (PEPK…KEPG), and 62-72 (GKKEEKQEAGK). A disordered region spans residues 1–95 (MPKRKSPENA…EEVLSTNASH (95 aa)). Residue serine 6 is modified to Phosphoserine. Position 78 is a phosphoserine (serine 78).

This sequence belongs to the HMGN family. As to quaternary structure, interacts with the ligand binding domain of the thyroid receptor (TR) (in vitro). Requires the presence of thyroid hormone for its interaction. Interacts with transcriptional regulator SEHBP. Interacts with nucleosomes.

Its subcellular location is the nucleus. In terms of biological role, binds to nucleosomes, regulating chromatin structure and consequently, chromatin-dependent processes such as transcription, DNA replication and DNA repair. Affects both insulin and glucagon levels and modulates the expression of pancreatic genes involved in insulin secretion. Regulates the expression of the glucose transporter SLC2A2 by binding specifically to its promoter region and recruiting PDX1 and additional transcription factors. Regulates the expression of SLC6A9, a glycine transporter which regulates the glycine concentration in synaptic junctions in the central nervous system, by binding to its transcription start site. May play a role in ocular development and astrocyte function. In Rattus norvegicus (Rat), this protein is High mobility group nucleosome-binding domain-containing protein 3 (Hmgn3).